We begin with the raw amino-acid sequence, 143 residues long: Nucleoside diphosphate kinase (143 aa).

ATP-binding residues include K10, F58, R86, T92, R103, and N113. The active-site Pros-phosphohistidine intermediate is the H116.

This sequence belongs to the NDK family. Homotetramer. Mg(2+) serves as cofactor.

Its subcellular location is the cytoplasm. It carries out the reaction a 2'-deoxyribonucleoside 5'-diphosphate + ATP = a 2'-deoxyribonucleoside 5'-triphosphate + ADP. It catalyses the reaction a ribonucleoside 5'-diphosphate + ATP = a ribonucleoside 5'-triphosphate + ADP. Functionally, major role in the synthesis of nucleoside triphosphates other than ATP. The ATP gamma phosphate is transferred to the NDP beta phosphate via a ping-pong mechanism, using a phosphorylated active-site intermediate. This chain is Nucleoside diphosphate kinase, found in Ehrlichia ruminantium (strain Welgevonden).